We begin with the raw amino-acid sequence, 302 residues long: Glutaminase (302 aa).

Substrate is bound by residues Ser61, Asn111, Glu155, Asn162, Tyr186, Tyr238, and Val256.

This sequence belongs to the glutaminase family. As to quaternary structure, homotetramer.

The catalysed reaction is L-glutamine + H2O = L-glutamate + NH4(+). This is Glutaminase from Pseudomonas syringae pv. tomato (strain ATCC BAA-871 / DC3000).